The primary structure comprises 241 residues: L-aspartate dehydrogenase (241 aa).

Residues 10 to 11 (NI), Asp-28, 56 to 57 (AS), 63 to 64 (EY), 78 to 79 (IS), Ala-109, and Asn-164 each bind NAD(+). His-193 is an active-site residue.

It belongs to the L-aspartate dehydrogenase family. In terms of assembly, homodimer.

The enzyme catalyses L-aspartate + NADP(+) + H2O = oxaloacetate + NH4(+) + NADPH + H(+). The catalysed reaction is L-aspartate + NAD(+) + H2O = oxaloacetate + NH4(+) + NADH + H(+). It functions in the pathway cofactor biosynthesis; NAD(+) biosynthesis; iminoaspartate from L-aspartate (dehydrogenase route): step 1/1. Competitively inhibited by L-malate and NH(4)(+). Specifically catalyzes the NAD or NADP-dependent dehydrogenation of L-aspartate to iminoaspartate. Does not show aspartate oxidase activity. Is also able to catalyze the reverse reaction, i.e. the reductive amination of oxaloacetate. This is L-aspartate dehydrogenase from Thermotoga maritima (strain ATCC 43589 / DSM 3109 / JCM 10099 / NBRC 100826 / MSB8).